The primary structure comprises 153 residues: Nucleoside diphosphate kinase 3 (153 aa).

ATP is bound by residues Lys11, Phe59, Arg87, Thr93, Arg104, and Asn114. The active-site Pros-phosphohistidine intermediate is His117.

The protein belongs to the NDK family. As to quaternary structure, homohexamer. It depends on Mg(2+) as a cofactor.

It is found in the plastid. It localises to the chloroplast thylakoid lumen. The enzyme catalyses a 2'-deoxyribonucleoside 5'-diphosphate + ATP = a 2'-deoxyribonucleoside 5'-triphosphate + ADP. It catalyses the reaction a ribonucleoside 5'-diphosphate + ATP = a ribonucleoside 5'-triphosphate + ADP. Functionally, major role in the synthesis of nucleoside triphosphates other than ATP. The ATP gamma phosphate is transferred to the NDP beta phosphate via a ping-pong mechanism, using a phosphorylated active-site intermediate. Shows the highest specificity towards GDP. The polypeptide is Nucleoside diphosphate kinase 3 (Spinacia oleracea (Spinach)).